The following is a 194-amino-acid chain: Large ribosomal subunit protein eL15 (194 aa).

Positions 161 to 194 (GLTSAGKKGRGLMYKGKGAEKARPSVRANGKKTK) are disordered.

Belongs to the eukaryotic ribosomal protein eL15 family.

The chain is Large ribosomal subunit protein eL15 from Methanococcus maripaludis (strain C5 / ATCC BAA-1333).